Consider the following 230-residue polypeptide: Type 4 apparatus protein DotY (230 aa).

Residues 202-230 form a disordered region; the sequence is EPKALETKREEIRQEIESGAEAPTTQSIR. Over residues 204-217 the composition is skewed to basic and acidic residues; that stretch reads KALETKREEIRQEI.

As to quaternary structure, the T4BSS is a complex nanomachine composed of several subcomplexes. This subunit is part of the Type IV Coupling Complex (T4CC), a subcomplex composed of the DotLMNYZ core and the IcmSW-LvgA adapter subunits, linked by the C-terminal tail of DotL. Six DotLMNYZ hetero-pentameric units may assemble into a hexameric nanomachine, forming an inner membrane channel for effectors to pass through. Interacts exclusively with DotZ. DotY and DotZ are co-dependent for the assembly into the T4CC.

The protein localises to the cytoplasm. In terms of biological role, component of the Dot/Icm type IVB secretion system (T4BSS), which is used to inject bacterial effector proteins into eukaryotic host cells. Part of a subcomplex which recruits effector proteins and delivers them to the core transmembrane subcomplex. DotY and DotZ play a role in effector translocation, but are not essential and do not influence the stability of the subcomplex main components. The DotY/DotZ main function is to optimize secretion by modulating the delivery trajectory of the IcmSW module and the localization of the machinery to the poles. This is Type 4 apparatus protein DotY from Legionella pneumophila subsp. pneumophila (strain Philadelphia 1 / ATCC 33152 / DSM 7513).